We begin with the raw amino-acid sequence, 236 residues long: Ribosome assembly factor mrt4 (236 aa).

The protein belongs to the universal ribosomal protein uL10 family. Associates with the pre-60S ribosomal particle.

It is found in the nucleus. The protein resides in the nucleolus. It localises to the cytoplasm. Its function is as follows. Component of the ribosome assembly machinery. Nuclear paralog of the ribosomal protein P0, it binds pre-60S subunits at an early stage of assembly in the nucleolus, and is replaced by P0 in cytoplasmic pre-60S subunits and mature 80S ribosomes. In Eremothecium gossypii (strain ATCC 10895 / CBS 109.51 / FGSC 9923 / NRRL Y-1056) (Yeast), this protein is Ribosome assembly factor mrt4.